The chain runs to 378 residues: UDP-N-acetylglucosamine--N-acetylmuramyl-(pentapeptide) pyrophosphoryl-undecaprenol N-acetylglucosamine transferase (378 aa).

UDP-N-acetyl-alpha-D-glucosamine contacts are provided by residues 14–16 (TGG), Asn125, Arg165, Ser193, and Gln293.

It belongs to the glycosyltransferase 28 family. MurG subfamily.

Its subcellular location is the cell inner membrane. The catalysed reaction is di-trans,octa-cis-undecaprenyl diphospho-N-acetyl-alpha-D-muramoyl-L-alanyl-D-glutamyl-meso-2,6-diaminopimeloyl-D-alanyl-D-alanine + UDP-N-acetyl-alpha-D-glucosamine = di-trans,octa-cis-undecaprenyl diphospho-[N-acetyl-alpha-D-glucosaminyl-(1-&gt;4)]-N-acetyl-alpha-D-muramoyl-L-alanyl-D-glutamyl-meso-2,6-diaminopimeloyl-D-alanyl-D-alanine + UDP + H(+). Its pathway is cell wall biogenesis; peptidoglycan biosynthesis. Functionally, cell wall formation. Catalyzes the transfer of a GlcNAc subunit on undecaprenyl-pyrophosphoryl-MurNAc-pentapeptide (lipid intermediate I) to form undecaprenyl-pyrophosphoryl-MurNAc-(pentapeptide)GlcNAc (lipid intermediate II). In Bartonella henselae (strain ATCC 49882 / DSM 28221 / CCUG 30454 / Houston 1) (Rochalimaea henselae), this protein is UDP-N-acetylglucosamine--N-acetylmuramyl-(pentapeptide) pyrophosphoryl-undecaprenol N-acetylglucosamine transferase.